Consider the following 271-residue polypeptide: Thermoregulatory protein LcrF (271 aa).

One can recognise an HTH araC/xylS-type domain in the interval 167–265 (ERLQKFMEEN…GCTPSQARLT (99 aa)). 2 consecutive DNA-binding regions (H-T-H motif) follow at residues 184 to 205 (SKFA…GTVY) and 232 to 255 (IVDI…RRRF).

Functionally, transcriptional activator of the thermally regulated virulent yopE gene. LcrF activity could be modulated by the interaction with an inducer molecule serving as a temperature messenger. The availability of the messenger would in turn be controlled by a temperature-responsive process serving as a cellular thermometer. The protein is Thermoregulatory protein LcrF (lcrF) of Yersinia pestis.